We begin with the raw amino-acid sequence, 418 residues long: Thyroid hormone receptor alpha-B (418 aa).

The tract at residues 1 to 40 (MDQNLSGLDCLSEPDEKRWPDGKRKRKNSQCMGKSGMSGD) is disordered. Residues 1–60 (MDQNLSGLDCLSEPDEKRWPDGKRKRKNSQCMGKSGMSGDSLVSLPPAGYIPSYLDKDEP) form a modulating region. NR C4-type zinc fingers lie at residues 61–81 (CVVC…CEGC) and 99–123 (CKYD…FKKC). The segment at residues 61 to 128 (CVVCSDKATG…RFKKCIAVGM (68 aa)) is a DNA-binding region (nuclear receptor). An NR LBD domain is found at 171–415 (EEWELIRIVT…PPLFLEVFED (245 aa)).

It belongs to the nuclear hormone receptor family. NR1 subfamily. Binds to thyroid hormone receptor element (TRE) weakly as homodimers and monomers, but binds TRE with much higher affinity as heterodimers with retinoid X receptors. Can bind DNA as a heterodimer with either rxra or rxrg.

The protein localises to the nucleus. High affinity receptor for triiodothyronine (T3). The sequence is that of Thyroid hormone receptor alpha-B (thra-b) from Xenopus laevis (African clawed frog).